A 233-amino-acid chain; its full sequence is Small ribosomal subunit protein uS2c (233 aa).

It belongs to the universal ribosomal protein uS2 family.

The protein localises to the plastid. Its subcellular location is the chloroplast. This is Small ribosomal subunit protein uS2c (rps2) from Galdieria sulphuraria (Red alga).